A 286-amino-acid chain; its full sequence is DNA-directed RNA polymerase subunit Rpo3 (286 aa).

The protein belongs to the archaeal Rpo3/eukaryotic RPB3 RNA polymerase subunit family. As to quaternary structure, part of the RNA polymerase complex.

The protein resides in the cytoplasm. It catalyses the reaction RNA(n) + a ribonucleoside 5'-triphosphate = RNA(n+1) + diphosphate. Its function is as follows. DNA-dependent RNA polymerase (RNAP) catalyzes the transcription of DNA into RNA using the four ribonucleoside triphosphates as substrates. This is DNA-directed RNA polymerase subunit Rpo3 from Aeropyrum pernix (strain ATCC 700893 / DSM 11879 / JCM 9820 / NBRC 100138 / K1).